The chain runs to 809 residues: MAEEPRAPEALSSTFMLNMTSDASVRRIVRRIGTLARRRVQQLPDMETFSPEFDPELSEPPFLPFSAYVITGTAGAGKSTSVSCLHHTMDCLVTGATTVAAQNLSQTLRAYCPTVYSAFGFKSRHINMTQRVSSHGRSTDAALEELQRRDLAKYWPVLSDIAAEFRRTKPRGLYSGVSGPAFEVLRDMHQGQLWTTNVIVVDEAGTLSVHILTAVVFCYWFFNAWLRTPLYRRGRIPCIVCVGSPTQTDAFQSSFSHETQVNKIRECDNILTFLVGNPRAATYVDVARNWALFINNKRCTDVQFGHLMKTLEYGLELSPDILAYVDRFVVPRAAIMDPAQYVGWTRLFLSHAEVKTFLTTLHATLKTAGQGRAARGTGGDGGGVTMFTCPVECEVFLDPLAQYKTLVGLPGLTAHTWLQKNYARLGNYSQFADQDMVPVGTEQDEERVKVTYNVTYVKHSSVSVNCKTKKSICGYTGTFGDFMDTLEADSFVEAHGHEQPEYVYSFLARLIYGGIYAFSHGGHSLCENGEYVAELGAVPLPGRTWDPEVTAGMELGELPLEVAWDGERSPAAVFYARVLAPPAANSAPLCSLLNIYNDLRAYFRQCLDVAVRYGGREFRDLPFCTFTNNMLIRDNIEFTSDEPLLHGLLDYASTTENYTLLGYTHLNVFFGIRGKQQPQDAGSSRMPRLMVKDEAGFVCCLEHNTNKLYETIEDKSLNLCSIRDYGISSKLAMTIAKAQGLSLNKVAICFGSHRNIKPGHVYVALSRARHSNCVVMDRNPLSEMITGEGNPASGYIVDALKNSRALLVY.

72-79 provides a ligand contact to ATP; it reads GTAGAGKS.

This sequence belongs to the herpesviridae helicase family. In terms of assembly, associates with the primase and the primase-associated factor to form the helicase-primase complex.

Its subcellular location is the host nucleus. Component of the helicase/primase complex. Unwinds the DNA at the replication forks and generates single-stranded DNA for both leading and lagging strand synthesis. The primase synthesizes short RNA primers on the lagging strand that the polymerase elongates using dNTPs. Possesses helicase-like motifs and therefore may act as the helicase subunit of the complex. In Epstein-Barr virus (strain B95-8) (HHV-4), this protein is DNA replication helicase.